Here is a 473-residue protein sequence, read N- to C-terminus: Ribulose bisphosphate carboxylase large chain (473 aa).

Asparagine 116 and threonine 166 together coordinate substrate. Residue lysine 168 is the Proton acceptor of the active site. Lysine 170 serves as a coordination point for substrate. Residues lysine 194, aspartate 196, and glutamate 197 each contribute to the Mg(2+) site. N6-carboxylysine is present on lysine 194. The Proton acceptor role is filled by histidine 287. The substrate site is built by arginine 288, histidine 320, and serine 372.

This sequence belongs to the RuBisCO large chain family. Type I subfamily. As to quaternary structure, heterohexadecamer of 8 large chains and 8 small chains. Requires Mg(2+) as cofactor.

The catalysed reaction is 2 (2R)-3-phosphoglycerate + 2 H(+) = D-ribulose 1,5-bisphosphate + CO2 + H2O. It catalyses the reaction D-ribulose 1,5-bisphosphate + O2 = 2-phosphoglycolate + (2R)-3-phosphoglycerate + 2 H(+). Functionally, ruBisCO catalyzes two reactions: the carboxylation of D-ribulose 1,5-bisphosphate, the primary event in carbon dioxide fixation, as well as the oxidative fragmentation of the pentose substrate. Both reactions occur simultaneously and in competition at the same active site. This Nitrosomonas sp. (strain ENI-11) protein is Ribulose bisphosphate carboxylase large chain.